We begin with the raw amino-acid sequence, 64 residues long: Large ribosomal subunit protein bL28 (64 aa).

This sequence belongs to the bacterial ribosomal protein bL28 family.

In Trichlorobacter lovleyi (strain ATCC BAA-1151 / DSM 17278 / SZ) (Geobacter lovleyi), this protein is Large ribosomal subunit protein bL28.